The following is a 455-amino-acid chain: Probable glycine dehydrogenase (decarboxylating) subunit 1 (455 aa).

Belongs to the GcvP family. N-terminal subunit subfamily. As to quaternary structure, the glycine cleavage system is composed of four proteins: P, T, L and H. In this organism, the P 'protein' is a heterodimer of two subunits.

The catalysed reaction is N(6)-[(R)-lipoyl]-L-lysyl-[glycine-cleavage complex H protein] + glycine + H(+) = N(6)-[(R)-S(8)-aminomethyldihydrolipoyl]-L-lysyl-[glycine-cleavage complex H protein] + CO2. Functionally, the glycine cleavage system catalyzes the degradation of glycine. The P protein binds the alpha-amino group of glycine through its pyridoxal phosphate cofactor; CO(2) is released and the remaining methylamine moiety is then transferred to the lipoamide cofactor of the H protein. The sequence is that of Probable glycine dehydrogenase (decarboxylating) subunit 1 from Saccharolobus islandicus (strain Y.G.57.14 / Yellowstone #1) (Sulfolobus islandicus).